The sequence spans 299 residues: MLRLFYFSAIIASVILNFVGIIMNLFITVVNCKTWVKSHRISSSDRILFSLGITRFLMLGLFLVNTIYFVSSNTERSVYLSAFFVLCFMFLDSSSVWFVTLLNILYCVKITNFQHSVFLLLKRNISPKIPRLLLACVLISAFTTCLYITLSQASPFPELVTTRNNTSFNISEGILSLVVSLVLSSSLQFIINVTSASLLIHSLRRHIQKMQKNATGFWNPQTEAHVGAMKLMVYFLILYIPYSVATLVQYLPFYAGMDMGTKSICLIFATLYSPGHSVLIIITHPKLKTTAKKILCFKK.

At 1 to 9 the chain is on the extracellular side; it reads MLRLFYFSA. Residues 10–30 traverse the membrane as a helical segment; the sequence is IIASVILNFVGIIMNLFITVV. At 31–46 the chain is on the cytoplasmic side; it reads NCKTWVKSHRISSSDR. A helical transmembrane segment spans residues 47–67; the sequence is ILFSLGITRFLMLGLFLVNTI. Over 68 to 81 the chain is Extracellular; that stretch reads YFVSSNTERSVYLS. The chain crosses the membrane as a helical span at residues 82–102; that stretch reads AFFVLCFMFLDSSSVWFVTLL. At 103-131 the chain is on the cytoplasmic side; that stretch reads NILYCVKITNFQHSVFLLLKRNISPKIPR. A helical transmembrane segment spans residues 132–152; it reads LLLACVLISAFTTCLYITLSQ. Residues 153–172 are Extracellular-facing; sequence ASPFPELVTTRNNTSFNISE. Asparagine 164, asparagine 165, and asparagine 169 each carry an N-linked (GlcNAc...) asparagine glycan. Residues 173-193 traverse the membrane as a helical segment; it reads GILSLVVSLVLSSSLQFIINV. The Cytoplasmic portion of the chain corresponds to 194 to 230; the sequence is TSASLLIHSLRRHIQKMQKNATGFWNPQTEAHVGAMK. The helical transmembrane segment at 231–251 threads the bilayer; it reads LMVYFLILYIPYSVATLVQYL. Topologically, residues 252 to 262 are extracellular; sequence PFYAGMDMGTK. Residues 263–283 traverse the membrane as a helical segment; sequence SICLIFATLYSPGHSVLIIIT. Topologically, residues 284 to 299 are cytoplasmic; the sequence is HPKLKTTAKKILCFKK.

This sequence belongs to the G-protein coupled receptor T2R family. Expressed in subsets of taste receptor cells of the tongue and palate epithelium and exclusively in gustducin-positive cells. Expressed on airway ciliated epithelium.

It is found in the membrane. It localises to the cell projection. The protein localises to the cilium membrane. Its function is as follows. Gustducin-coupled receptor for denatonium and N(6)-propyl-2-thiouracil implicated in the perception of bitter compounds in the oral cavity and the gastrointestinal tract. Signals through PLCB2 and the calcium-regulated cation channel TRPM5. In airway epithelial cells, binding of denatonium increases the intracellular calcium ion concentration and stimulates ciliary beat frequency. The chain is Taste receptor type 2 member 4 (TAS2R4) from Homo sapiens (Human).